We begin with the raw amino-acid sequence, 160 residues long: Transcription elongation factor GreA (160 aa).

A coiled-coil region spans residues 50 to 70; that stretch reads AAREQQSFNEGRIQELEAKLS.

This sequence belongs to the GreA/GreB family.

Necessary for efficient RNA polymerase transcription elongation past template-encoded arresting sites. The arresting sites in DNA have the property of trapping a certain fraction of elongating RNA polymerases that pass through, resulting in locked ternary complexes. Cleavage of the nascent transcript by cleavage factors such as GreA or GreB allows the resumption of elongation from the new 3'terminus. GreA releases sequences of 2 to 3 nucleotides. The sequence is that of Transcription elongation factor GreA from Legionella pneumophila (strain Paris).